Reading from the N-terminus, the 572-residue chain is Cytochrome P450 monooxygenase xilC (572 aa).

Residue Cys515 participates in heme binding.

It belongs to the cytochrome P450 family. It depends on heme as a cofactor.

Its pathway is secondary metabolite biosynthesis. Functionally, cytochrome P450 monooxygenase; part of the gene cluster that mediates the biosynthesis of the 6-methyl-2-pyrone derivative xylariolide D. XilC hydroxylates the 5-alkyl-6-methyl-2-pyrone backbone called prexylariolide D, produced by the highly reducing polyketide synthase xilA, on its side chain to form xylariolide D. The protein is Cytochrome P450 monooxygenase xilC of Penicillium crustosum (Blue mold fungus).